The following is a 194-amino-acid chain: Inosine triphosphate pyrophosphatase (194 aa).

8-13 is a binding site for ITP; that stretch reads TGNANK. A Mg(2+)-binding site is contributed by Glu-47. Residues Lys-59, 75–76, Lys-92, 151–154, Lys-174, and 179–180 each bind ITP; these read DT, FGWD, and HR.

Belongs to the HAM1 NTPase family. In terms of assembly, homodimer. Requires Mg(2+) as cofactor. Mn(2+) serves as cofactor.

It is found in the cytoplasm. The protein localises to the nucleus. It carries out the reaction ITP + H2O = IMP + diphosphate + H(+). It catalyses the reaction dITP + H2O = dIMP + diphosphate + H(+). The catalysed reaction is XTP + H2O = XMP + diphosphate + H(+). In terms of biological role, pyrophosphatase that hydrolyzes non-canonical purine nucleotides such as inosine triphosphate (ITP), deoxyinosine triphosphate (dITP) or xanthosine 5'-triphosphate (XTP) to their respective monophosphate derivatives. The enzyme does not distinguish between the deoxy- and ribose forms. Probably excludes non-canonical purines from RNA and DNA precursor pools, thus preventing their incorporation into RNA and DNA and avoiding chromosomal lesions. In Scheffersomyces stipitis (strain ATCC 58785 / CBS 6054 / NBRC 10063 / NRRL Y-11545) (Yeast), this protein is Inosine triphosphate pyrophosphatase.